Reading from the N-terminus, the 417-residue chain is Voltage-gated ClC-type chloride channel ClcB (417 aa).

Transmembrane regions (helical) follow at residues 5–25 (LLIATIIGILAALAVAGFRHA), 54–74 (LITPAVGGLAAGALLWGWQKM), 146–166 (LWIACGAAAGMASAYHAPLAG), 168–188 (LFIAEILFGTLMLASLGPVVI), 190–210 (AVVALLTTHLLSGGNALLYTV), 222–242 (AMIISTGLVAGVCGPLFMWLM), 258–278 (WQLALGGFIVGLLSLLTPAVW), 288–308 (FLLSPPLLSVIAGIFICKLLA), 316–336 (GAPGGVFTPTLFIGLSIGMLY), 339–359 (MWGFWLPGADEMAILLGLTGM), and 380–400 (MTGEYRLLPGLLIACVVASVL).

This sequence belongs to the chloride channel (TC 2.A.49) family. ClcB subfamily.

Its subcellular location is the cell inner membrane. Probably acts as an electrical shunt for an outwardly-directed proton pump that is linked to amino acid decarboxylation, as part of the extreme acid resistance (XAR) response. This is Voltage-gated ClC-type chloride channel ClcB from Citrobacter koseri (strain ATCC BAA-895 / CDC 4225-83 / SGSC4696).